Here is a 270-residue protein sequence, read N- to C-terminus: ATP synthase subunit a 1 (270 aa).

Transmembrane regions (helical) follow at residues valine 38–tyrosine 58, isoleucine 98–valine 118, aspartate 143–isoleucine 163, leucine 208–tryptophan 228, and alanine 239–valine 259.

This sequence belongs to the ATPase A chain family. As to quaternary structure, F-type ATPases have 2 components, CF(1) - the catalytic core - and CF(0) - the membrane proton channel. CF(1) has five subunits: alpha(3), beta(3), gamma(1), delta(1), epsilon(1). CF(0) has three main subunits: a(1), b(2) and c(9-12). The alpha and beta chains form an alternating ring which encloses part of the gamma chain. CF(1) is attached to CF(0) by a central stalk formed by the gamma and epsilon chains, while a peripheral stalk is formed by the delta and b chains.

The protein localises to the cell inner membrane. Key component of the proton channel; it plays a direct role in the translocation of protons across the membrane. In Vibrio campbellii (strain ATCC BAA-1116), this protein is ATP synthase subunit a 1.